The chain runs to 286 residues: 4-hydroxybenzoate octaprenyltransferase (286 aa).

Helical transmembrane passes span 19–39 (AGWL…SHGF), 42–62 (WHLL…GCCV), 92–112 (ALVL…TTNA), 115–135 (IAWS…KRYV), 137–157 (MPQA…FAAV), 161–181 (VPLL…AYDT), 206–226 (FDVA…ALAL), 233–253 (AIYW…GWLI), and 264–284 (AFRL…LSYL).

The protein belongs to the UbiA prenyltransferase family. Mg(2+) is required as a cofactor.

It is found in the cell inner membrane. It catalyses the reaction all-trans-octaprenyl diphosphate + 4-hydroxybenzoate = 4-hydroxy-3-(all-trans-octaprenyl)benzoate + diphosphate. It functions in the pathway cofactor biosynthesis; ubiquinone biosynthesis. Functionally, catalyzes the prenylation of para-hydroxybenzoate (PHB) with an all-trans polyprenyl group. Mediates the second step in the final reaction sequence of ubiquinone-8 (UQ-8) biosynthesis, which is the condensation of the polyisoprenoid side chain with PHB, generating the first membrane-bound Q intermediate 3-octaprenyl-4-hydroxybenzoate. The sequence is that of 4-hydroxybenzoate octaprenyltransferase from Polaromonas sp. (strain JS666 / ATCC BAA-500).